The following is a 332-amino-acid chain: uncharacterized protein (332 aa).

Belongs to the bacterial solute-binding protein 1 family. WtpA subfamily.

This is an uncharacterized protein from Methanococcus maripaludis (strain DSM 14266 / JCM 13030 / NBRC 101832 / S2 / LL).